A 227-amino-acid chain; its full sequence is Small ribosomal subunit protein uS7 (227 aa).

Acidic residues-rich tracts occupy residues 1-12 and 20-31; these read MSESDTDPDIDD and NDVDVAVDESES. A disordered region spans residues 1 to 43; it reads MSESDTDPDIDDDAHNNGDNDVDVAVDESESAETTTDTDTASA. The segment covering 32–43 has biased composition (low complexity); that stretch reads AETTTDTDTASA.

It belongs to the universal ribosomal protein uS7 family. Part of the 30S ribosomal subunit.

One of the primary rRNA binding proteins, it binds directly to 16S rRNA where it nucleates assembly of the head domain of the 30S subunit. Is located at the subunit interface close to the decoding center. The polypeptide is Small ribosomal subunit protein uS7 (Haloquadratum walsbyi (strain DSM 16790 / HBSQ001)).